The sequence spans 66 residues: Large ribosomal subunit protein uL29 (66 aa).

This sequence belongs to the universal ribosomal protein uL29 family.

The protein is Large ribosomal subunit protein uL29 of Borrelia duttonii (strain Ly).